The sequence spans 553 residues: Dihydroxy-acid dehydratase (553 aa).

Asp78 contributes to the Mg(2+) binding site. A [2Fe-2S] cluster-binding site is contributed by Cys119. 2 residues coordinate Mg(2+): Asp120 and Lys121. Lys121 is subject to N6-carboxylysine. Position 191 (Cys191) interacts with [2Fe-2S] cluster. Glu444 is a binding site for Mg(2+). The Proton acceptor role is filled by Ser470.

The protein belongs to the IlvD/Edd family. As to quaternary structure, homodimer. The cofactor is [2Fe-2S] cluster. Requires Mg(2+) as cofactor.

The catalysed reaction is (2R)-2,3-dihydroxy-3-methylbutanoate = 3-methyl-2-oxobutanoate + H2O. The enzyme catalyses (2R,3R)-2,3-dihydroxy-3-methylpentanoate = (S)-3-methyl-2-oxopentanoate + H2O. Its pathway is amino-acid biosynthesis; L-isoleucine biosynthesis; L-isoleucine from 2-oxobutanoate: step 3/4. It functions in the pathway amino-acid biosynthesis; L-valine biosynthesis; L-valine from pyruvate: step 3/4. In terms of biological role, functions in the biosynthesis of branched-chain amino acids. Catalyzes the dehydration of (2R,3R)-2,3-dihydroxy-3-methylpentanoate (2,3-dihydroxy-3-methylvalerate) into 2-oxo-3-methylpentanoate (2-oxo-3-methylvalerate) and of (2R)-2,3-dihydroxy-3-methylbutanoate (2,3-dihydroxyisovalerate) into 2-oxo-3-methylbutanoate (2-oxoisovalerate), the penultimate precursor to L-isoleucine and L-valine, respectively. This Methanococcoides burtonii (strain DSM 6242 / NBRC 107633 / OCM 468 / ACE-M) protein is Dihydroxy-acid dehydratase.